Reading from the N-terminus, the 479-residue chain is Sulfate adenylyltransferase subunit 1 (479 aa).

Positions 25–239 (KSLLRFLTCG…EVLETVDIQR (215 aa)) constitute a tr-type G domain. The G1 stretch occupies residues 34–41 (GSVDDGKS). Residue 34 to 41 (GSVDDGKS) participates in GTP binding. The interval 92–96 (GITID) is G2. A G3 region spans residues 113-116 (DTPG). GTP-binding positions include 113–117 (DTPGH) and 168–171 (NKMD). The G4 stretch occupies residues 168–171 (NKMD). A G5 region spans residues 206-208 (SAL).

The protein belongs to the TRAFAC class translation factor GTPase superfamily. Classic translation factor GTPase family. CysN/NodQ subfamily. As to quaternary structure, heterodimer composed of CysD, the smaller subunit, and CysN.

It catalyses the reaction sulfate + ATP + H(+) = adenosine 5'-phosphosulfate + diphosphate. Its pathway is sulfur metabolism; hydrogen sulfide biosynthesis; sulfite from sulfate: step 1/3. With CysD forms the ATP sulfurylase (ATPS) that catalyzes the adenylation of sulfate producing adenosine 5'-phosphosulfate (APS) and diphosphate, the first enzymatic step in sulfur assimilation pathway. APS synthesis involves the formation of a high-energy phosphoric-sulfuric acid anhydride bond driven by GTP hydrolysis by CysN coupled to ATP hydrolysis by CysD. The polypeptide is Sulfate adenylyltransferase subunit 1 (Salmonella paratyphi B (strain ATCC BAA-1250 / SPB7)).